The chain runs to 468 residues: Aldehyde dehydrogenase family 3 member B1 (468 aa).

The residue at position 1 (methionine 1) is an N-acetylmethionine. 188-193 (GNAYVG) serves as a coordination point for NAD(+). Active-site residues include glutamate 210 and cysteine 244. S-palmitoyl cysteine attachment occurs at residues cysteine 462 and cysteine 463. At cysteine 465 the chain carries Cysteine methyl ester. Cysteine 465 is lipidated: S-geranylgeranyl cysteine. Residues 466–468 (TLL) constitute a propeptide, removed in mature form.

Belongs to the aldehyde dehydrogenase family. Post-translationally, dually lipidated in the C-terminus; prenylation occurs prior to, and is a prerequisite for palmitoylation. It is also required for activity towards long-chain substrates. In terms of tissue distribution, highly expressed in kidney and liver. In brain is expressed at moderate levels in cortex, striatum and hippocampus, and at lower levels in brainstem and cerebellum.

It is found in the cell membrane. The catalysed reaction is an aldehyde + NAD(+) + H2O = a carboxylate + NADH + 2 H(+). It carries out the reaction a long-chain fatty aldehyde + NAD(+) + H2O = a long-chain fatty acid + NADH + 2 H(+). It catalyses the reaction a medium-chain fatty aldehyde + NAD(+) + H2O = a medium-chain fatty acid + NADH + 2 H(+). The enzyme catalyses octanal + NAD(+) + H2O = octanoate + NADH + 2 H(+). The catalysed reaction is nonanal + NAD(+) + H2O = nonanoate + NADH + 2 H(+). It carries out the reaction hexadecanoate + NADH + 2 H(+) = hexadecanal + NAD(+) + H2O. It catalyses the reaction (2E)-octenal + NAD(+) + H2O = (2E)-octenoate + NADH + 2 H(+). The enzyme catalyses (E)-non-2-enal + NAD(+) + H2O = (E)-non-2-enoate + NADH + 2 H(+). The catalysed reaction is (E)-4-hydroxynon-2-enal + NAD(+) + H2O = (E)-4-hydroxynon-2-enoate + NADH + 2 H(+). It carries out the reaction (2E)-hexadecenal + NAD(+) + H2O = (E)-hexadec-2-enoate + NADH + 2 H(+). It catalyses the reaction benzaldehyde + NAD(+) + H2O = benzoate + NADH + 2 H(+). The enzyme catalyses an aldehyde + NADP(+) + H2O = a carboxylate + NADPH + 2 H(+). The catalysed reaction is a medium-chain fatty aldehyde + NADP(+) + H2O = a medium-chain fatty acid + NADPH + 2 H(+). It carries out the reaction hexanal + NADP(+) + H2O = hexanoate + NADPH + 2 H(+). It catalyses the reaction octanal + NADP(+) + H2O = octanoate + NADPH + 2 H(+). The enzyme catalyses nonanal + NADP(+) + H2O = nonanoate + NADPH + 2 H(+). The catalysed reaction is (2E)-octenal + NADP(+) + H2O = (2E)-octenoate + NADPH + 2 H(+). It carries out the reaction (E)-non-2-enal + NADP(+) + H2O = (E)-non-2-enoate + NADPH + 2 H(+). It catalyses the reaction (E)-4-hydroxynon-2-enal + NADP(+) + H2O = (E)-4-hydroxynon-2-enoate + NADPH + 2 H(+). The enzyme catalyses benzaldehyde + NADP(+) + H2O = benzoate + NADPH + 2 H(+). The protein operates within alcohol metabolism; ethanol degradation; acetate from ethanol: step 2/2. Oxidizes medium and long chain saturated and unsaturated fatty aldehydes generated in the plasma membrane into non-toxic fatty acids. May have a protective role against the cytotoxicity induced by lipid peroxidation. Short-chain fatty aldehydes are not good substrates. Can use both NADP(+) and NAD(+) as electron acceptor in vitro, however in vivo preference will depend on their tissue levels. Low activity towards acetaldehyde and 3,4-dihydroxyphenylacetaldehyde. Able to metabolize aromatic aldehydes such as benzaldehyde to their acid form. The protein is Aldehyde dehydrogenase family 3 member B1 (Aldh3b1) of Mus musculus (Mouse).